A 68-amino-acid chain; its full sequence is Sperm-associated antigen 11A (68 aa).

The first 19 residues, 1 to 19 (MKVLLLFAVFFCLVQRNSG), serve as a signal peptide directing secretion. Disulfide bonds link cysteine 30–cysteine 59, cysteine 37–cysteine 52, and cysteine 42–cysteine 60.

It belongs to the beta-defensin family. As to expression, only expressed in epididymis (middle part of the caput).

The protein resides in the secreted. Functionally, has antimicrobial activity against E.coli. Plays a role in the defense response in the male reproductive tract, contributing to sperm maturation, storage and protection. In Rattus norvegicus (Rat), this protein is Sperm-associated antigen 11A.